A 311-amino-acid chain; its full sequence is Olfactory receptor 14I1 (311 aa).

Residues 1-26 (MDNLTKVTEFLLMEFSGIWELQVLHA) are Extracellular-facing. Residue asparagine 3 is glycosylated (N-linked (GlcNAc...) asparagine). Residues 27–47 (GLFLLIYLAVLVGNLLIIAVI) traverse the membrane as a helical segment. Residues 48-55 (TLDQHLHT) are Cytoplasmic-facing. Residues 56-76 (PMYFFLKNLSVLDLCYISVTV) traverse the membrane as a helical segment. The Extracellular segment spans residues 77-92 (PKSIRNSLTRRSSISY). Residues 93 to 113 (LGCVAQVYFFSAFASAELAFL) traverse the membrane as a helical segment. A disulfide bond links cysteine 95 and cysteine 188. At 114–141 (TVMSYDRYVAICHPLQYRAVMTSGGCYQ) the chain is on the cytoplasmic side. Residues 142-162 (MAVTTWLSCFSYAAVHTGNMF) traverse the membrane as a helical segment. The Extracellular portion of the chain corresponds to 163–189 (REHVCRSSVIHQFFRDIPHVLALVSCE). A helical transmembrane segment spans residues 190–210 (VFFVEFLTLALSSCLVLGCFI). Topologically, residues 211–241 (LMMISYFQIFSTVLRIPSGQSRAKAFSTCSP) are cytoplasmic. A helical membrane pass occupies residues 242–262 (QLIVIMLFLTTGLFAALGPIA). Residues 263–269 (KALSIQD) are Extracellular-facing. A helical transmembrane segment spans residues 270–290 (LVIALTYTVLPPFLNPIIYSL). At 291–311 (RNKEIKTAMWRLFVKIYFLQK) the chain is on the cytoplasmic side.

It belongs to the G-protein coupled receptor 1 family.

It is found in the cell membrane. Its function is as follows. Odorant receptor. The polypeptide is Olfactory receptor 14I1 (OR14I1) (Homo sapiens (Human)).